The following is a 288-amino-acid chain: Acetylglutamate kinase (288 aa).

Substrate-binding positions include 66 to 67 (GG), R88, and N182.

The protein belongs to the acetylglutamate kinase family. ArgB subfamily.

It is found in the cytoplasm. The catalysed reaction is N-acetyl-L-glutamate + ATP = N-acetyl-L-glutamyl 5-phosphate + ADP. Its pathway is amino-acid biosynthesis; L-arginine biosynthesis; N(2)-acetyl-L-ornithine from L-glutamate: step 2/4. Its function is as follows. Catalyzes the ATP-dependent phosphorylation of N-acetyl-L-glutamate. The polypeptide is Acetylglutamate kinase (Brachyspira hyodysenteriae (strain ATCC 49526 / WA1)).